Here is a 1042-residue protein sequence, read N- to C-terminus: Isoleucine--tRNA ligase (1042 aa).

The 'HIGH' region motif lies at 48-58 (PFATGLPHFGH). The 'KMSKS' region motif lies at 594–598 (KMSKS). Residue K597 participates in ATP binding.

This sequence belongs to the class-I aminoacyl-tRNA synthetase family. IleS type 2 subfamily. In terms of assembly, monomer. Zn(2+) serves as cofactor.

Its subcellular location is the cytoplasm. The catalysed reaction is tRNA(Ile) + L-isoleucine + ATP = L-isoleucyl-tRNA(Ile) + AMP + diphosphate. In terms of biological role, catalyzes the attachment of isoleucine to tRNA(Ile). As IleRS can inadvertently accommodate and process structurally similar amino acids such as valine, to avoid such errors it has two additional distinct tRNA(Ile)-dependent editing activities. One activity is designated as 'pretransfer' editing and involves the hydrolysis of activated Val-AMP. The other activity is designated 'posttransfer' editing and involves deacylation of mischarged Val-tRNA(Ile). This Borrelia garinii subsp. bavariensis (strain ATCC BAA-2496 / DSM 23469 / PBi) (Borreliella bavariensis) protein is Isoleucine--tRNA ligase.